The sequence spans 129 residues: Large ribosomal subunit protein bL20 (129 aa).

A compositionally biased stretch (basic residues) spans 1-17 (MARVKRSVNAHKKRRSV). The interval 1–29 (MARVKRSVNAHKKRRSVLKASKGYRGQRS) is disordered.

It belongs to the bacterial ribosomal protein bL20 family.

In terms of biological role, binds directly to 23S ribosomal RNA and is necessary for the in vitro assembly process of the 50S ribosomal subunit. It is not involved in the protein synthesizing functions of that subunit. The chain is Large ribosomal subunit protein bL20 from Mycobacterium ulcerans (strain Agy99).